The sequence spans 159 residues: UPF0262 protein TM1040_3562 (159 aa).

The segment at 1 to 21 (MSRISQIELDDRNLPPPTPEI) is disordered.

The protein belongs to the UPF0262 family.

This is UPF0262 protein TM1040_3562 from Ruegeria sp. (strain TM1040) (Silicibacter sp.).